Consider the following 20-residue polypeptide: Large ribosomal subunit protein uL10 (20 aa).

The protein belongs to the universal ribosomal protein uL10 family. As to quaternary structure, part of the ribosomal stalk of the 50S ribosomal subunit. The N-terminus interacts with L11 and the large rRNA to form the base of the stalk. The C-terminus forms an elongated spine to which L12 dimers bind in a sequential fashion forming a multimeric L10(L12)X complex.

Forms part of the ribosomal stalk, playing a central role in the interaction of the ribosome with GTP-bound translation factors. This is Large ribosomal subunit protein uL10 (rplJ) from Citrobacter freundii.